The primary structure comprises 241 residues: Probable transcriptional regulatory protein azo0574 (241 aa).

Residues 1–21 (MAGHSKWANIQHRKGRQDAKR) are disordered.

This sequence belongs to the TACO1 family.

The protein resides in the cytoplasm. This chain is Probable transcriptional regulatory protein azo0574, found in Azoarcus sp. (strain BH72).